Consider the following 375-residue polypeptide: MNNRDKRVLVGMSGGIDSSATCIMLQEQGYEVVGVTMRTWDVPSRFSTPGQDEPDDVLEARALAERLGIEHHVADVRKEFKQIIVKHFIDEYMQGRTPNPCVLCNPLFKERILCEWADQTNCAHISTGHYCRLEERKGKLYIVAGDDQTKDQSYFLWKLPQEILQRFLFPLGTYTKQEVREYLRQKGFEAKARGGESMEICFIEGDYRNFLRSQCPDIDTQVGPGWFVNSKGVKIGQHKGFPYYTIGQRKGLEIALGHPAYVLRINAEKNTVMLGDAEELKAEYMLVEDYHITEMQDLLQCKDLSVRIRYRSKPIPCQVLVLDEKQLLVRFLSEASAIAPGQSAVFYEGKRVLGGAFIASQRGIRKIAADNQDKF.

Residues 11 to 18 (GMSGGIDS) and Met37 each bind ATP. The active-site Nucleophile is the Cys104. A disulfide bridge links Cys104 with Cys201. Gly128 contributes to the ATP binding site. The interaction with tRNA stretch occupies residues 150 to 152 (KDQ). The active-site Cysteine persulfide intermediate is Cys201. An interaction with tRNA region spans residues 309-310 (RY).

It belongs to the MnmA/TRMU family.

Its subcellular location is the cytoplasm. It carries out the reaction S-sulfanyl-L-cysteinyl-[protein] + uridine(34) in tRNA + AH2 + ATP = 2-thiouridine(34) in tRNA + L-cysteinyl-[protein] + A + AMP + diphosphate + H(+). Catalyzes the 2-thiolation of uridine at the wobble position (U34) of tRNA, leading to the formation of s(2)U34. The protein is tRNA-specific 2-thiouridylase MnmA 3 of Phocaeicola vulgatus (strain ATCC 8482 / DSM 1447 / JCM 5826 / CCUG 4940 / NBRC 14291 / NCTC 11154) (Bacteroides vulgatus).